The primary structure comprises 375 residues: 4,4'-diaponeurosporenoate glycosyltransferase (375 aa).

4 helical membrane-spanning segments follow: residues 3 to 23, 164 to 184, 277 to 297, and 330 to 350; these read WLSRILTVIVAMSMACGALIF, FYEGFSAIFNLMTVVGMNVFS, IMAAIVLWLFGSIASILGLCL, and FSNLLMVCHPLLFMFFTKIFI.

Belongs to the glycosyltransferase 2 family. CrtQ subfamily.

It is found in the cell membrane. The protein operates within carotenoid biosynthesis; staphyloxanthin biosynthesis; staphyloxanthin from farnesyl diphosphate: step 4/5. In terms of biological role, catalyzes the glycosylation of 4,4'-diaponeurosporenoate, i.e. the esterification of glucose at the C1'' position with the carboxyl group of 4,4'-diaponeurosporenic acid, to form glycosyl-4,4'-diaponeurosporenoate. This is a step in the biosynthesis of staphyloxanthin, an orange pigment present in most staphylococci strains. This chain is 4,4'-diaponeurosporenoate glycosyltransferase (crtQ), found in Staphylococcus aureus (strain bovine RF122 / ET3-1).